The primary structure comprises 1417 residues: DNA-directed RNA polymerase subunit beta' (1417 aa).

Positions 68, 70, 83, and 86 each coordinate Zn(2+). The Mg(2+) site is built by Asp458, Asp460, and Asp462. Residues Cys811, Cys884, Cys891, and Cys894 each coordinate Zn(2+).

It belongs to the RNA polymerase beta' chain family. As to quaternary structure, the RNAP catalytic core consists of 2 alpha, 1 beta, 1 beta' and 1 omega subunit. When a sigma factor is associated with the core the holoenzyme is formed, which can initiate transcription. Requires Mg(2+) as cofactor. The cofactor is Zn(2+).

It carries out the reaction RNA(n) + a ribonucleoside 5'-triphosphate = RNA(n+1) + diphosphate. Its function is as follows. DNA-dependent RNA polymerase catalyzes the transcription of DNA into RNA using the four ribonucleoside triphosphates as substrates. The sequence is that of DNA-directed RNA polymerase subunit beta' from Francisella tularensis subsp. tularensis (strain FSC 198).